Here is a 146-residue protein sequence, read N- to C-terminus: Large ribosomal subunit protein uL15 (146 aa).

The segment at 1 to 56 (MKLHELRAAEGANKASKRVGRGTGSGLGKTSGKGQNGQNSRSGGGVRPGFEGGQMP) is disordered. 2 stretches are compositionally biased toward gly residues: residues 21 to 35 (RGTGSGLGKTSGKGQ) and 42 to 52 (SGGGVRPGFEG).

Belongs to the universal ribosomal protein uL15 family. Part of the 50S ribosomal subunit.

Functionally, binds to the 23S rRNA. The chain is Large ribosomal subunit protein uL15 from Clostridium botulinum (strain Loch Maree / Type A3).